We begin with the raw amino-acid sequence, 512 residues long: MEELKGYLEKSRSKQQHFLYPLLFQEYIYVLAHDHGLNVNGSIFYEPAEISGYDKNFSSLLVKRLITRIYQQNYLINSVNDSNQNGFVGHNKNFYSQMISEGFAVIVEIPFSLRLVSSLEGKKEIPKSQNLRSIHSIFPFFEDKLSHLNCVSDILIPYPVHLEILVQILQCWIQDVPSLHLLRFFFHEYQNWNNLITPKKSNYYGFSKENPRLFLFLYNSYVVECESILVFLRKQSSYLRSTSSGTFLERAHFYEKIEQHLVVLCCNDFQKTLWLCKDPFMHYVRYQGKSILSSKGTHLLMKKWKSYFVNFWQCHFHFWSQPCRIHINQFSNFSFYFLGYLSSVPINPSAVKSQMLENFFLVDTVTKKFETIVPIIPMIGALSKAKFCNVSGNPISKPVWADLSDSDIIDRFGRTCRNLSHYYSGSSKKQSLYRIKYILRLSCARTLARKHKSTVRAFLQRLGSEFLEEFFTEEEKALSLILPRISYPLHKLYRERIWYLDIIRINDLVNHL.

The protein belongs to the intron maturase 2 family. MatK subfamily.

The protein localises to the plastid. Its subcellular location is the chloroplast. Its function is as follows. Usually encoded in the trnK tRNA gene intron. Probably assists in splicing its own and other chloroplast group II introns. This is Maturase K from Amorphophallus abyssinicus (Black arum).